A 398-amino-acid chain; its full sequence is Probable aminomethyltransferase (398 aa).

The protein belongs to the GcvT family. The glycine cleavage system is composed of four proteins: P, T, L and H.

The catalysed reaction is N(6)-[(R)-S(8)-aminomethyldihydrolipoyl]-L-lysyl-[protein] + (6S)-5,6,7,8-tetrahydrofolate = N(6)-[(R)-dihydrolipoyl]-L-lysyl-[protein] + (6R)-5,10-methylene-5,6,7,8-tetrahydrofolate + NH4(+). The glycine cleavage system catalyzes the degradation of glycine. This Pyrococcus abyssi (strain GE5 / Orsay) protein is Probable aminomethyltransferase.